The following is a 64-amino-acid chain: uncharacterized protein (64 aa).

Belongs to the orthopoxviruses VACWR006 protein family.

This is an uncharacterized protein from Vaccinia virus (strain Western Reserve) (VACV).